The primary structure comprises 559 residues: Inositol-3-phosphate synthase 1 (559 aa).

NAD(+)-binding residues include glycine 67, glycine 68, asparagine 69, asparagine 70, aspartate 141, serine 177, valine 178, glutamine 188, arginine 191, threonine 228, alanine 229, asparagine 230, threonine 231, glycine 278, serine 279, aspartate 303, serine 306, asparagine 337, asparagine 338, aspartate 339, and lysine 352. Serine 279 bears the Phosphoserine mark. At serine 357 the chain carries Phosphoserine. Positions 390, 391, 419, and 420 each coordinate NAD(+).

This sequence belongs to the myo-inositol 1-phosphate synthase family. It depends on NAD(+) as a cofactor.

It localises to the cytoplasm. The enzyme catalyses D-glucose 6-phosphate = 1D-myo-inositol 3-phosphate. It participates in polyol metabolism; myo-inositol biosynthesis; myo-inositol from D-glucose 6-phosphate: step 1/2. Key enzyme in myo-inositol biosynthesis pathway that catalyzes the conversion of glucose 6-phosphate to 1-myo-inositol 1-phosphate in a NAD-dependent manner. Rate-limiting enzyme in the synthesis of all inositol-containing compounds. The protein is Inositol-3-phosphate synthase 1 (ISYNA1) of Macaca fascicularis (Crab-eating macaque).